Reading from the N-terminus, the 77-residue chain is MTFEEAMNRLNEIVERLERGNVGLEESLALFEEGLKLHRFCSEKLKELELKLVEVQEDEAGEVTFEEIVEMEDDLPF.

It belongs to the XseB family. In terms of assembly, heterooligomer composed of large and small subunits.

The protein resides in the cytoplasm. It catalyses the reaction Exonucleolytic cleavage in either 5'- to 3'- or 3'- to 5'-direction to yield nucleoside 5'-phosphates.. Its function is as follows. Bidirectionally degrades single-stranded DNA into large acid-insoluble oligonucleotides, which are then degraded further into small acid-soluble oligonucleotides. The protein is Exodeoxyribonuclease 7 small subunit of Carboxydothermus hydrogenoformans (strain ATCC BAA-161 / DSM 6008 / Z-2901).